Here is a 271-residue protein sequence, read N- to C-terminus: 4-hydroxy-tetrahydrodipicolinate reductase (271 aa).

Residues 11–16 (GGSGRM) and Glu37 each bind NAD(+). Arg38 is a binding site for NADP(+). NAD(+) is bound by residues 101–103 (GTT) and 125–128 (APNM). Residue His158 is the Proton donor/acceptor of the active site. (S)-2,3,4,5-tetrahydrodipicolinate is bound at residue His159. The Proton donor role is filled by Lys162. (S)-2,3,4,5-tetrahydrodipicolinate is bound at residue 168–169 (GT).

The protein belongs to the DapB family.

The protein localises to the cytoplasm. The enzyme catalyses (S)-2,3,4,5-tetrahydrodipicolinate + NAD(+) + H2O = (2S,4S)-4-hydroxy-2,3,4,5-tetrahydrodipicolinate + NADH + H(+). It carries out the reaction (S)-2,3,4,5-tetrahydrodipicolinate + NADP(+) + H2O = (2S,4S)-4-hydroxy-2,3,4,5-tetrahydrodipicolinate + NADPH + H(+). The protein operates within amino-acid biosynthesis; L-lysine biosynthesis via DAP pathway; (S)-tetrahydrodipicolinate from L-aspartate: step 4/4. Catalyzes the conversion of 4-hydroxy-tetrahydrodipicolinate (HTPA) to tetrahydrodipicolinate. In Shewanella piezotolerans (strain WP3 / JCM 13877), this protein is 4-hydroxy-tetrahydrodipicolinate reductase.